Here is a 331-residue protein sequence, read N- to C-terminus: Small ribosomal subunit protein uS2 (331 aa).

It belongs to the universal ribosomal protein uS2 family.

The polypeptide is Small ribosomal subunit protein uS2 (Rhodopseudomonas palustris (strain HaA2)).